The following is a 492-amino-acid chain: N-succinylglutamate 5-semialdehyde dehydrogenase (492 aa).

220-225 (GSSTTG) serves as a coordination point for NAD(+). Catalysis depends on residues Glu243 and Cys277.

Belongs to the aldehyde dehydrogenase family. AstD subfamily.

It catalyses the reaction N-succinyl-L-glutamate 5-semialdehyde + NAD(+) + H2O = N-succinyl-L-glutamate + NADH + 2 H(+). Its pathway is amino-acid degradation; L-arginine degradation via AST pathway; L-glutamate and succinate from L-arginine: step 4/5. In terms of biological role, catalyzes the NAD-dependent reduction of succinylglutamate semialdehyde into succinylglutamate. This chain is N-succinylglutamate 5-semialdehyde dehydrogenase, found in Klebsiella pneumoniae subsp. pneumoniae (strain ATCC 700721 / MGH 78578).